A 150-amino-acid polypeptide reads, in one-letter code: Snaclec CTL-Eoc125 (150 aa).

A signal peptide spans 1–23 (MGRFISVSFGLLVVFLSLSGIGA). Intrachain disulfides connect Cys27-Cys38, Cys55-Cys144, and Cys121-Cys136. In terms of domain architecture, C-type lectin spans 34-145 (YEGHCYKVFS…CSSTQQFICK (112 aa)).

Belongs to the snaclec family. Heterodimer; disulfide-linked. As to expression, expressed by the venom gland.

It localises to the secreted. Interferes with one step of hemostasis (modulation of platelet aggregation, or coagulation cascade, for example). The polypeptide is Snaclec CTL-Eoc125 (Echis ocellatus (Ocellated saw-scaled viper)).